A 636-amino-acid chain; its full sequence is Protein SOSEKI 2 (636 aa).

The DIX-like oligomerization domain stretch occupies residues 9 to 103; it reads HKIEVIYLLS…YVLKALEVMD (95 aa). 4 disordered regions span residues 164 to 188, 281 to 304, 340 to 393, and 499 to 524; these read VHNN…SRVP, HGRL…TVDI, VEGS…TSAK, and LGSG…VSRP. Polar residues-rich tracts occupy residues 375 to 390 and 499 to 510; these read SSKS…TYET and LGSGQASESFSP.

Belongs to the SOSEKI family. Homodimer. Forms long polymer filaments with other SOKs proteins polymers crucial for polar localization and biological activity.

The protein localises to the cell membrane. Its function is as follows. SOSEKI proteins locally interpret global polarity cues and can influence cell division orientation to coordinate cell polarization relative to body axes. This chain is Protein SOSEKI 2, found in Physcomitrium patens (Spreading-leaved earth moss).